We begin with the raw amino-acid sequence, 116 residues long: Ribosome-binding factor A (116 aa).

This sequence belongs to the RbfA family. As to quaternary structure, monomer. Binds 30S ribosomal subunits, but not 50S ribosomal subunits or 70S ribosomes.

The protein localises to the cytoplasm. Functionally, one of several proteins that assist in the late maturation steps of the functional core of the 30S ribosomal subunit. Associates with free 30S ribosomal subunits (but not with 30S subunits that are part of 70S ribosomes or polysomes). Required for efficient processing of 16S rRNA. May interact with the 5'-terminal helix region of 16S rRNA. The polypeptide is Ribosome-binding factor A (Ureaplasma urealyticum serovar 10 (strain ATCC 33699 / Western)).